The following is a 558-amino-acid chain: uncharacterized protein (558 aa).

A disordered region spans residues 531-558; sequence NEDDGTSASPTAMTFDMPPEHPFYSHYR.

This is an uncharacterized protein from Saccharomyces cerevisiae (strain ATCC 204508 / S288c) (Baker's yeast).